A 398-amino-acid chain; its full sequence is 8-amino-7-oxononanoate synthase (398 aa).

Arginine 26 is a substrate binding site. Glycine 113–phenylalanine 114 provides a ligand contact to pyridoxal 5'-phosphate. Residue histidine 138 participates in substrate binding. Residues serine 181, histidine 209, and threonine 238 each contribute to the pyridoxal 5'-phosphate site. At lysine 241 the chain carries N6-(pyridoxal phosphate)lysine. Threonine 355 provides a ligand contact to substrate.

Belongs to the class-II pyridoxal-phosphate-dependent aminotransferase family. BioF subfamily. Homodimer. The cofactor is pyridoxal 5'-phosphate.

It carries out the reaction 6-carboxyhexanoyl-[ACP] + L-alanine + H(+) = (8S)-8-amino-7-oxononanoate + holo-[ACP] + CO2. It participates in cofactor biosynthesis; biotin biosynthesis. Catalyzes the decarboxylative condensation of pimeloyl-[acyl-carrier protein] and L-alanine to produce 8-amino-7-oxononanoate (AON), [acyl-carrier protein], and carbon dioxide. The sequence is that of 8-amino-7-oxononanoate synthase from Aeromonas salmonicida (strain A449).